Here is a 38-residue protein sequence, read N- to C-terminus: Large ribosomal subunit protein bL36 (38 aa).

The protein belongs to the bacterial ribosomal protein bL36 family.

The chain is Large ribosomal subunit protein bL36 from Karelsulcia muelleri (strain GWSS) (Sulcia muelleri).